The following is a 963-amino-acid chain: Isoleucine--tRNA ligase (963 aa).

The short motif at 66 to 76 is the 'HIGH' region element; that stretch reads PYANGDIHIGH. Position 596 (Glu596) interacts with L-isoleucyl-5'-AMP. The 'KMSKS' region motif lies at 637–641; it reads KMSKS. Lys640 contributes to the ATP binding site. Zn(2+) is bound by residues Cys926, Cys929, Cys946, and Cys949.

It belongs to the class-I aminoacyl-tRNA synthetase family. IleS type 1 subfamily. As to quaternary structure, monomer. The cofactor is Zn(2+).

Its subcellular location is the cytoplasm. The enzyme catalyses tRNA(Ile) + L-isoleucine + ATP = L-isoleucyl-tRNA(Ile) + AMP + diphosphate. Functionally, catalyzes the attachment of isoleucine to tRNA(Ile). As IleRS can inadvertently accommodate and process structurally similar amino acids such as valine, to avoid such errors it has two additional distinct tRNA(Ile)-dependent editing activities. One activity is designated as 'pretransfer' editing and involves the hydrolysis of activated Val-AMP. The other activity is designated 'posttransfer' editing and involves deacylation of mischarged Val-tRNA(Ile). The protein is Isoleucine--tRNA ligase of Cupriavidus pinatubonensis (strain JMP 134 / LMG 1197) (Cupriavidus necator (strain JMP 134)).